The following is a 100-amino-acid chain: Small ribosomal subunit protein uS14c (100 aa).

The protein belongs to the universal ribosomal protein uS14 family. In terms of assembly, part of the 30S ribosomal subunit.

It is found in the plastid. The protein localises to the chloroplast. In terms of biological role, binds 16S rRNA, required for the assembly of 30S particles. This chain is Small ribosomal subunit protein uS14c, found in Chlorokybus atmophyticus (Soil alga).